The primary structure comprises 398 residues: Putative FBD-associated F-box protein At5g56700 (398 aa).

Residues 1–47 (MAKISDLSDELLVKILSFLPTKEAVSTSCLSKQWEFLWMWLSKLEFY) form the F-box domain. The 49-residue stretch at 340-388 (WKNNKSSVPKCLLESLETFEFAGYIGTPEERDFLSYIFKHARCLKSSSI) folds into the FBD domain.

The polypeptide is Putative FBD-associated F-box protein At5g56700 (Arabidopsis thaliana (Mouse-ear cress)).